We begin with the raw amino-acid sequence, 209 residues long: Large ribosomal subunit protein uL3 (209 aa).

The interval 117–142 is disordered; it reads FQGPIKRHGQSRGPETHGSRYHRRPG.

This sequence belongs to the universal ribosomal protein uL3 family. Part of the 50S ribosomal subunit. Forms a cluster with proteins L14 and L19.

Functionally, one of the primary rRNA binding proteins, it binds directly near the 3'-end of the 23S rRNA, where it nucleates assembly of the 50S subunit. The polypeptide is Large ribosomal subunit protein uL3 (Clostridioides difficile (strain 630) (Peptoclostridium difficile)).